Reading from the N-terminus, the 1442-residue chain is Death-associated protein kinase 1 (1442 aa).

The Protein kinase domain occupies 13–275 (YDTGEELGSG…IQDSLQHPWI (263 aa)). ATP contacts are provided by residues 19–27 (LGSGQFAVV) and Lys42. Catalysis depends on Asp139, which acts as the Proton acceptor. The segment at 267 to 334 (QDSLQHPWIK…RSNMSVARSD (68 aa)) is calmodulin-binding. At Ser289 the chain carries Phosphoserine; by RPS6KA1 and RPS6KA3. The segment at 292–301 (NMEKFKKFAA) is autoinhibitory domain. Ser308 is subject to Phosphoserine; by autocatalysis. Phosphoserine is present on residues Ser319 and Ser333. ANK repeat units follow at residues 378-407 (HGTP…RIDV), 411-440 (GGSN…PLDV), 444-473 (SGET…NPDF), 477-506 (EEET…NVNI), 510-539 (EGET…DLNA), 543-572 (DGHI…FVDF), 576-605 (HGNT…NLDI), and 609-638 (YGRT…NVEA). Residues 681–955 (TQNLQPRIKL…NHLQEIRSQI (275 aa)) form the Roc domain. The residue at position 734 (Ser734) is a Phosphoserine; by MAPK1. One copy of the ANK 9 repeat lies at 875 to 904 (KLKNPLRVVLVATHADIMNIPRPAGGEFGY). Ser1115 carries the phosphoserine modification. The ANK 10 repeat unit spans residues 1164 to 1196 (DADIRLWVSGCRIANRGAELLVLLVNHGQGIEV). Residues 1312–1396 (KLSRLLDPPD…DAADFLLKAS (85 aa)) enclose the Death domain. Ser1433 carries the phosphoserine modification.

The protein belongs to the protein kinase superfamily. CAMK Ser/Thr protein kinase family. DAP kinase subfamily. As to quaternary structure, interacts with KLHL20. Interacts (via death domain) with MAPK1 and MAPK3. Interacts with MAP1B (via N-terminus). Interacts with PRKD1 in an oxidative stress-regulated manner. Interacts with PIN1, PDCD6, BECN1, TSC2 and STX1A. Interacts (via kinase domain) with DAPK3 (via kinase domain). Interacts with GRINB. Interacts (via death domain) with UNC5B (via death domain). Interacts with UNC5C (via death domain). It depends on Mg(2+) as a cofactor. Ubiquitinated by the BCR(KLHL20) E3 ubiquitin ligase complex, leading to its degradation by the proteasome. Post-translationally, in response to mitogenic stimulation (PMA or EGF), phosphorylated at Ser-289; phosphorylation suppresses DAPK1 pro-apoptotic function. Autophosphorylation at Ser-308 inhibits its catalytic activity. Phosphorylation at Ser-734 by MAPK1 increases its catalytic activity and promotes cytoplasmic retention of MAPK1. Endoplasmic-stress can cause dephosphorylation at Ser-308. As to expression, high levels in bladder, uterus, vas deferens, lung, liver and kidney.

It carries out the reaction L-seryl-[protein] + ATP = O-phospho-L-seryl-[protein] + ADP + H(+). The catalysed reaction is L-threonyl-[protein] + ATP = O-phospho-L-threonyl-[protein] + ADP + H(+). With respect to regulation, activated by Ca(2+)/calmodulin. Regulated by a locking mechanism, involving autophosphorylation at Ser-308 and calmodulin binding. In the inactive state, Ser-308 is phosphorylated. Activation involves its dephosphorylation and a release-of-autoinhibition mechanism where binding of calmodulin induces a conformational change that relieves the steric block of the active site by the autoinhibitory domain. Activity is modulated by UNC5B and NTN1. UNC5B activates it by inhibiting the phosphorylation at Ser-308, whereas NTN1 inhibits UNC5B-mediated activation of DAPK1. Endoplasmic-stress activates by causing Ser-308 dephosphorylation. Calcium/calmodulin-dependent serine/threonine kinase involved in multiple cellular signaling pathways that trigger cell survival, apoptosis, and autophagy. Regulates both type I apoptotic and type II autophagic cell deaths signal, depending on the cellular setting. The former is caspase-dependent, while the latter is caspase-independent and is characterized by the accumulation of autophagic vesicles. Phosphorylates PIN1 resulting in inhibition of its catalytic activity, nuclear localization, and cellular function. Phosphorylates TPM1, enhancing stress fiber formation in endothelial cells. Phosphorylates STX1A and significantly decreases its binding to STXBP1. Phosphorylates PRKD1 and regulates JNK signaling by binding and activating PRKD1 under oxidative stress. Phosphorylates BECN1, reducing its interaction with BCL2 and BCL2L1 and promoting the induction of autophagy. Phosphorylates TSC2, disrupting the TSC1-TSC2 complex and stimulating mTORC1 activity in a growth factor-dependent pathway. Phosphorylates RPS6, MYL9 and DAPK3. Acts as a signaling amplifier of NMDA receptors at extrasynaptic sites for mediating brain damage in stroke. Cerebral ischemia recruits DAPK1 into the NMDA receptor complex and it phosphorylates GRINB at Ser-1303 inducing injurious Ca(2+) influx through NMDA receptor channels, resulting in an irreversible neuronal death. Required together with DAPK3 for phosphorylation of RPL13A upon interferon-gamma activation which is causing RPL13A involvement in transcript-selective translation inhibition. The polypeptide is Death-associated protein kinase 1 (Dapk1) (Mus musculus (Mouse)).